Reading from the N-terminus, the 659-residue chain is Mannosyl-oligosaccharide 1,2-alpha-mannosidase IA (659 aa).

Residues 1 to 48 (MPVGGLLPLFSSPAGGGLGGGLGGGLGGGGGGGGRKGSGPSAFRLTEK) lie on the Cytoplasmic side of the membrane. Residues 49-69 (FVLLLVFSAFITLCFGAIFFL) traverse the membrane as a helical; Signal-anchor for type II membrane protein segment. Over 70 to 659 (PDSSKLLSGV…NIKKVEDNEK (590 aa)) the chain is Lumenal. Positions 88–121 (QPAADHKPGPGARAEDAADGRARPGEEGAPGDPA) are disordered. Basic and acidic residues predominate over residues 91 to 113 (ADHKPGPGARAEDAADGRARPGE). A disulfide bridge connects residues C482 and C514. Residue E528 is the Proton donor of the active site. T639 is a binding site for Ca(2+).

Belongs to the glycosyl hydrolase 47 family. Requires Ca(2+) as cofactor.

Its subcellular location is the endoplasmic reticulum membrane. The catalysed reaction is N(4)-(alpha-D-Man-(1-&gt;2)-alpha-D-Man-(1-&gt;2)-alpha-D-Man-(1-&gt;3)-[alpha-D-Man-(1-&gt;2)-alpha-D-Man-(1-&gt;3)-[alpha-D-Man-(1-&gt;2)-alpha-D-Man-(1-&gt;6)]-alpha-D-Man-(1-&gt;6)]-beta-D-Man-(1-&gt;4)-beta-D-GlcNAc-(1-&gt;4)-beta-D-GlcNAc)-L-asparaginyl-[protein] (N-glucan mannose isomer 9A1,2,3B1,2,3) + 4 H2O = N(4)-(alpha-D-Man-(1-&gt;3)-[alpha-D-Man-(1-&gt;3)-[alpha-D-Man-(1-&gt;6)]-alpha-D-Man-(1-&gt;6)]-beta-D-Man-(1-&gt;4)-beta-D-GlcNAc-(1-&gt;4)-beta-D-GlcNAc)-L-asparaginyl-[protein] (N-glucan mannose isomer 5A1,2) + 4 beta-D-mannose. It carries out the reaction N(4)-(alpha-D-Man-(1-&gt;2)-alpha-D-Man-(1-&gt;2)-alpha-D-Man-(1-&gt;3)-[alpha-D-Man-(1-&gt;3)-[alpha-D-Man-(1-&gt;2)-alpha-D-Man-(1-&gt;6)]-alpha-D-Man-(1-&gt;6)]-beta-D-Man-(1-&gt;4)-beta-D-GlcNAc-(1-&gt;4)-beta-D-GlcNAc)-L-asparaginyl-[protein] (N-glucan mannose isomer 8A1,2,3B1,3) + 3 H2O = N(4)-(alpha-D-Man-(1-&gt;3)-[alpha-D-Man-(1-&gt;3)-[alpha-D-Man-(1-&gt;6)]-alpha-D-Man-(1-&gt;6)]-beta-D-Man-(1-&gt;4)-beta-D-GlcNAc-(1-&gt;4)-beta-D-GlcNAc)-L-asparaginyl-[protein] (N-glucan mannose isomer 5A1,2) + 3 beta-D-mannose. It participates in protein modification; protein glycosylation. Inhibited by both 1-deoxymannojirimycin and kifunensine. Functionally, involved in the maturation of Asn-linked oligosaccharides. Progressively trim alpha-1,2-linked mannose residues from Man(9)GlcNAc(2) to produce Man(5)GlcNAc(2). This Sus scrofa (Pig) protein is Mannosyl-oligosaccharide 1,2-alpha-mannosidase IA (MAN1A1).